Here is a 1041-residue protein sequence, read N- to C-terminus: Probable rhamnogalacturonate lyase C (1041 aa).

The N-terminal stretch at 1-21 (MFASTLRKTFVFLGLATYSAA) is a signal peptide. N-linked (GlcNAc...) asparagine glycosylation is found at Asn28, Asn94, Asn116, Asn142, Asn231, Asn283, Asn528, and Asn634. The segment at 703–728 (ISRPCPRKGGTRRRKKERKKEGKKQG) is disordered. Residues 707-720 (CPRKGGTRRRKKER) show a composition bias toward basic residues. An N-linked (GlcNAc...) asparagine glycan is attached at Asn864.

The protein belongs to the polysaccharide lyase 4 family.

It is found in the secreted. It carries out the reaction Endotype eliminative cleavage of L-alpha-rhamnopyranosyl-(1-&gt;4)-alpha-D-galactopyranosyluronic acid bonds of rhamnogalacturonan I domains in ramified hairy regions of pectin leaving L-rhamnopyranose at the reducing end and 4-deoxy-4,5-unsaturated D-galactopyranosyluronic acid at the non-reducing end.. Its function is as follows. Pectinolytic enzymes consist of four classes of enzymes: pectin lyase, polygalacturonase, pectin methylesterase and rhamnogalacturonase. Degrades the rhamnogalacturonan I (RG-I) backbone of pectin. The chain is Probable rhamnogalacturonate lyase C (rglC) from Emericella nidulans (strain FGSC A4 / ATCC 38163 / CBS 112.46 / NRRL 194 / M139) (Aspergillus nidulans).